Reading from the N-terminus, the 486-residue chain is NADH-quinone oxidoreductase subunit N (486 aa).

14 consecutive transmembrane segments (helical) span residues alanine 11 to valine 31, methionine 44 to leucine 64, proline 74 to alanine 94, phenylalanine 103 to valine 123, methionine 128 to leucine 148, phenylalanine 163 to glycine 183, valine 206 to phenylalanine 226, proline 238 to isoleucine 258, proline 267 to glycine 287, methionine 300 to threonine 320, methionine 328 to leucine 348, tyrosine 371 to phenylalanine 391, valine 404 to tyrosine 424, and leucine 452 to tyrosine 472.

This sequence belongs to the complex I subunit 2 family. As to quaternary structure, NDH-1 is composed of 14 different subunits. Subunits NuoA, H, J, K, L, M, N constitute the membrane sector of the complex.

Its subcellular location is the cell inner membrane. The enzyme catalyses a quinone + NADH + 5 H(+)(in) = a quinol + NAD(+) + 4 H(+)(out). NDH-1 shuttles electrons from NADH, via FMN and iron-sulfur (Fe-S) centers, to quinones in the respiratory chain. The immediate electron acceptor for the enzyme in this species is believed to be ubiquinone. Couples the redox reaction to proton translocation (for every two electrons transferred, four hydrogen ions are translocated across the cytoplasmic membrane), and thus conserves the redox energy in a proton gradient. This chain is NADH-quinone oxidoreductase subunit N, found in Laribacter hongkongensis (strain HLHK9).